A 266-amino-acid polypeptide reads, in one-letter code: 3-methyl-2-oxobutanoate hydroxymethyltransferase 2 (266 aa).

Mg(2+)-binding residues include Asp45 and Asp84. 3-methyl-2-oxobutanoate is bound by residues 45-46 (DS), Asp84, and Lys112. Residue Glu114 coordinates Mg(2+). Glu181 (proton acceptor) is an active-site residue.

It belongs to the PanB family. As to quaternary structure, homodecamer; pentamer of dimers. Mg(2+) serves as cofactor.

The protein localises to the cytoplasm. The enzyme catalyses 3-methyl-2-oxobutanoate + (6R)-5,10-methylene-5,6,7,8-tetrahydrofolate + H2O = 2-dehydropantoate + (6S)-5,6,7,8-tetrahydrofolate. It functions in the pathway cofactor biosynthesis; (R)-pantothenate biosynthesis; (R)-pantoate from 3-methyl-2-oxobutanoate: step 1/2. Its function is as follows. Catalyzes the reversible reaction in which hydroxymethyl group from 5,10-methylenetetrahydrofolate is transferred onto alpha-ketoisovalerate to form ketopantoate. In Pseudomonas entomophila (strain L48), this protein is 3-methyl-2-oxobutanoate hydroxymethyltransferase 2.